The primary structure comprises 240 residues: uncharacterized protein (240 aa).

A signal peptide spans 1-18; the sequence is MTRYTYLFILQIISCSFA. N-linked (GlcNAc...) asparagine glycosylation is present at N127. Residues 215–235 traverse the membrane as a helical segment; sequence GFISSSQLPQFVYLIVFTIIG.

Its subcellular location is the membrane. This is an uncharacterized protein from Caenorhabditis elegans.